We begin with the raw amino-acid sequence, 151 residues long: Large ribosomal subunit protein uL13 (151 aa).

The protein belongs to the universal ribosomal protein uL13 family. As to quaternary structure, part of the 50S ribosomal subunit.

Functionally, this protein is one of the early assembly proteins of the 50S ribosomal subunit, although it is not seen to bind rRNA by itself. It is important during the early stages of 50S assembly. In Petrotoga mobilis (strain DSM 10674 / SJ95), this protein is Large ribosomal subunit protein uL13.